Consider the following 104-residue polypeptide: Large ribosomal subunit protein bL28 (104 aa).

It belongs to the bacterial ribosomal protein bL28 family.

This is Large ribosomal subunit protein bL28 from Wolbachia pipientis wMel.